Here is an 829-residue protein sequence, read N- to C-terminus: 1,4-alpha-glucan branching enzyme GlgB (829 aa).

Asp-405 serves as the catalytic Nucleophile. The Proton donor role is filled by Glu-458. Positions 758–829 (ASKATKVSTK…TTAKKTKDNA (72 aa)) are disordered. Composition is skewed to low complexity over residues 778–789 (VKAATKSSVTKV) and 810–820 (VTKTAKASAKT).

The protein belongs to the glycosyl hydrolase 13 family. GlgB subfamily. As to quaternary structure, monomer.

It carries out the reaction Transfers a segment of a (1-&gt;4)-alpha-D-glucan chain to a primary hydroxy group in a similar glucan chain.. It functions in the pathway glycan biosynthesis; glycogen biosynthesis. Functionally, catalyzes the formation of the alpha-1,6-glucosidic linkages in glycogen by scission of a 1,4-alpha-linked oligosaccharide from growing alpha-1,4-glucan chains and the subsequent attachment of the oligosaccharide to the alpha-1,6 position. The sequence is that of 1,4-alpha-glucan branching enzyme GlgB from Actinobacillus succinogenes (strain ATCC 55618 / DSM 22257 / CCUG 43843 / 130Z).